A 161-amino-acid chain; its full sequence is uncharacterized protein (161 aa).

A run of 4 helical transmembrane segments spans residues 22-42, 43-63, 89-109, and 110-130; these read LFFI…VFGH, LTVG…ALLV, LAII…AGLG, and VVFG…LPVL. Positions 141–161 are disordered; it reads VATYSSNGQTGGSEGRSASDD.

To M.leprae ML1138.

It localises to the cell membrane. This is an uncharacterized protein from Mycobacterium bovis (strain ATCC BAA-935 / AF2122/97).